A 159-amino-acid polypeptide reads, in one-letter code: NADH-quinone oxidoreductase subunit I (159 aa).

2 4Fe-4S ferredoxin-type domains span residues 51–80 and 90–119; these read RRYE…IEAD and TRYD…EGPN. 8 residues coordinate [4Fe-4S] cluster: Cys-60, Cys-63, Cys-66, Cys-70, Cys-99, Cys-102, Cys-105, and Cys-109.

The protein belongs to the complex I 23 kDa subunit family. In terms of assembly, NDH-1 is composed of 14 different subunits. Subunits NuoA, H, J, K, L, M, N constitute the membrane sector of the complex. Requires [4Fe-4S] cluster as cofactor.

It localises to the cell inner membrane. The catalysed reaction is a quinone + NADH + 5 H(+)(in) = a quinol + NAD(+) + 4 H(+)(out). Functionally, NDH-1 shuttles electrons from NADH, via FMN and iron-sulfur (Fe-S) centers, to quinones in the respiratory chain. The immediate electron acceptor for the enzyme in this species is believed to be ubiquinone. Couples the redox reaction to proton translocation (for every two electrons transferred, four hydrogen ions are translocated across the cytoplasmic membrane), and thus conserves the redox energy in a proton gradient. The chain is NADH-quinone oxidoreductase subunit I from Rickettsia massiliae (strain Mtu5).